The chain runs to 108 residues: MAAPGAGDPLNAKNGNAPFAQRIDPSREKLTPAQLQFMRQVQLAQWQKTLPQRRTRNIMTGLGIGALVLAIYGYTFYSVAQERFLDELEDEAKAARARALERERASGP.

The disordered stretch occupies residues 1-25 (MAAPGAGDPLNAKNGNAPFAQRIDP). At Ala2 the chain carries N-acetylalanine. At 2–57 (AAPGAGDPLNAKNGNAPFAQRIDPSREKLTPAQLQFMRQVQLAQWQKTLPQRRTRN) the chain is on the mitochondrial matrix side. Residues 58–80 (IMTGLGIGALVLAIYGYTFYSVA) form a helical membrane-spanning segment. The stretch at 78-106 (SVAQERFLDELEDEAKAARARALERERAS) forms a coiled coil. Topologically, residues 81–108 (QERFLDELEDEAKAARARALERERASGP) are mitochondrial intermembrane.

Belongs to the COA3 family. Along with COX14, core component of the MITRAC (mitochondrial translation regulation assembly intermediate of cytochrome c oxidase complex) complex. Interacts with MT-CO1/COX1, SMIM20, SURF1 and TIMM21.

It localises to the mitochondrion inner membrane. Functionally, core component of the MITRAC (mitochondrial translation regulation assembly intermediate of cytochrome c oxidase complex) complex, that regulates cytochrome c oxidase assembly. MITRAC complexes regulate both translation of mitochondrial encoded components and assembly of nuclear-encoded components imported in mitochondrion. Required for efficient translation of MT-CO1 and mitochondrial respiratory chain complex IV assembly. The sequence is that of Cytochrome c oxidase assembly factor 3 homolog, mitochondrial (Coa3) from Mus musculus (Mouse).